The primary structure comprises 554 residues: Glucose-6-phosphate isomerase (554 aa).

The active-site Proton donor is the Glu-359. Residues His-390 and Lys-518 contribute to the active site.

The protein belongs to the GPI family.

Its subcellular location is the cytoplasm. The catalysed reaction is alpha-D-glucose 6-phosphate = beta-D-fructose 6-phosphate. It participates in carbohydrate biosynthesis; gluconeogenesis. It functions in the pathway carbohydrate degradation; glycolysis; D-glyceraldehyde 3-phosphate and glycerone phosphate from D-glucose: step 2/4. Catalyzes the reversible isomerization of glucose-6-phosphate to fructose-6-phosphate. This is Glucose-6-phosphate isomerase from Pseudomonas entomophila (strain L48).